A 481-amino-acid polypeptide reads, in one-letter code: Mechanosensory protein 2 (481 aa).

The span at 1 to 22 (MSATMSSARNSVVSLSSNGSVK) shows a compositional bias: low complexity. Disordered stretches follow at residues 1-67 (MSAT…MATR) and 80-104 (SANS…GNGK). A compositionally biased stretch (polar residues) spans 27–38 (LVSNERSSSIQQ). The span at 86-104 (DSVKKEKQAEKDVEKGNGK) shows a compositional bias: basic and acidic residues. The chain crosses the membrane as a helical span at residues 115-135 (GVCGWILTILSYLLIFFTLPI). Positions 403–421 (EGGGGHGHSHGGGGGGLGS) are enriched in gly residues. A disordered region spans residues 403–481 (EGGGGHGHSH…SQLDPALLIR (79 aa)). Residues 433 to 447 (SGPSTTTTSGRPLLR) show a composition bias toward low complexity. Residues 463-473 (APNQSQTSVSQ) show a composition bias toward polar residues.

It belongs to the band 7/mec-2 family. Component of a non-voltage-gated amiloride-sensitive cation channel complex (also called the degenerin channel complex) composed of at least the mec-2, mec-4, mec-6 and mec-10 subunits; the complex mediates mechanotransduction in touch cells. Interacts with mec-6 and mec-4.

It localises to the membrane. In terms of biological role, subunit of an amiloride-sensitive cation channel (degenerin channel complex) permeable for sodium, potassium, lithium and N-methylglucamine, and required for mechanosensory transduction (touch sensitivity). Positively regulates the activity of the putative mechanosensory transduction channel. May link the mechanosensory channel and the microtubule cytoskeleton of the touch receptor neurons. Required for the function of a set of six touch receptor neurons. In Caenorhabditis elegans, this protein is Mechanosensory protein 2.